The chain runs to 877 residues: Alanine--tRNA ligase (877 aa).

Zn(2+)-binding residues include histidine 566, histidine 570, cysteine 668, and histidine 672.

This sequence belongs to the class-II aminoacyl-tRNA synthetase family. Zn(2+) serves as cofactor.

It localises to the cytoplasm. The catalysed reaction is tRNA(Ala) + L-alanine + ATP = L-alanyl-tRNA(Ala) + AMP + diphosphate. In terms of biological role, catalyzes the attachment of alanine to tRNA(Ala) in a two-step reaction: alanine is first activated by ATP to form Ala-AMP and then transferred to the acceptor end of tRNA(Ala). Also edits incorrectly charged Ser-tRNA(Ala) and Gly-tRNA(Ala) via its editing domain. In Staphylococcus aureus (strain USA300 / TCH1516), this protein is Alanine--tRNA ligase.